A 537-amino-acid chain; its full sequence is MFKREEIIEMANKDFEKAWIETKDLIKAKKVNESYPRIKPAFGKTHPVNDTIENLRQAYLRMGFEEYINPVIVDERDIYKQFGPEAMAVLDRCFYLAGLPRPDVGLSDEKISQIEKLGIKVSEHKESLQKILHGYKKGTLDGDDLVLEISNALEISSEMGLKILEEVFPEFKDLTAVSSKLTLRSHMTSGWFLTVSDLMNKKPLPFKLFSIDRCFRREQKEDKSHLMTYHSASCAIAGEGVDINDGKAIAEGLLSQFGFTNFKFIPDEKKSKYYTPETQTEVYAYHPKLKEWLEVATFGVYSPVALSKYGIDVPVMNLGLGVERLAMISGNFADVREMVYPQFYEHKLSDRAVASMVKLDKVPVMDEIYDLTKELIDSCVKNKDLKSPCELTIEKTFSFGKTKKNVKINIFEKEEGKNLLGPSILNEIYVYDGNVIGIPESFDGVKEEFKDFLEKGKAEGVPTGIRYIDALCFKITSKLEEAFVSNTTEFKVKVPIVRSLSDINLKIDDIALKQIMSKTKVIDVRGPVFLNVEVKIE.

Substrate-binding positions include 186 to 188, 231 to 233, 273 to 274, and Asn317; these read HMT, SAS, and YY.

The protein belongs to the class-II aminoacyl-tRNA synthetase family. O-phosphoseryl-tRNA(Cys) synthetase subfamily. Homotetramer. Interacts with SepCysS.

It catalyses the reaction tRNA(Cys) + O-phospho-L-serine + ATP = O-phospho-L-seryl-tRNA(Cys) + AMP + diphosphate. Its function is as follows. Catalyzes the attachment of O-phosphoserine (Sep) to tRNA(Cys). The chain is O-phosphoserine--tRNA(Cys) ligase from Methanococcus maripaludis (strain C5 / ATCC BAA-1333).